The primary structure comprises 117 residues: Small ribosomal subunit protein uS19c (117 aa).

This sequence belongs to the universal ribosomal protein uS19 family.

It localises to the plastid. Its function is as follows. Protein S19 forms a complex with S13 that binds strongly to the 16S ribosomal RNA. This is Small ribosomal subunit protein uS19c (rps19) from Helicosporidium sp. subsp. Simulium jonesii (Green alga).